Here is a 277-residue protein sequence, read N- to C-terminus: Large ribosomal subunit protein uL2 (277 aa).

2 disordered regions span residues 1-20 (MAVK…TTAD) and 210-277 (GRSR…RGGK). Over residues 210–221 (GRSRWLGRKPHQ) the composition is skewed to basic residues.

This sequence belongs to the universal ribosomal protein uL2 family. Part of the 50S ribosomal subunit. Forms a bridge to the 30S subunit in the 70S ribosome.

One of the primary rRNA binding proteins. Required for association of the 30S and 50S subunits to form the 70S ribosome, for tRNA binding and peptide bond formation. It has been suggested to have peptidyltransferase activity; this is somewhat controversial. Makes several contacts with the 16S rRNA in the 70S ribosome. In Deinococcus deserti (strain DSM 17065 / CIP 109153 / LMG 22923 / VCD115), this protein is Large ribosomal subunit protein uL2.